The sequence spans 436 residues: Enolase (436 aa).

Q167 lines the (2R)-2-phosphoglycerate pocket. The active-site Proton donor is E209. The Mg(2+) site is built by D246, E291, and D318. The (2R)-2-phosphoglycerate site is built by K343, R372, S373, and K394. K343 acts as the Proton acceptor in catalysis.

The protein belongs to the enolase family. Component of the RNA degradosome, a multiprotein complex involved in RNA processing and mRNA degradation. The cofactor is Mg(2+).

The protein localises to the cytoplasm. Its subcellular location is the secreted. It is found in the cell surface. The enzyme catalyses (2R)-2-phosphoglycerate = phosphoenolpyruvate + H2O. The protein operates within carbohydrate degradation; glycolysis; pyruvate from D-glyceraldehyde 3-phosphate: step 4/5. Catalyzes the reversible conversion of 2-phosphoglycerate (2-PG) into phosphoenolpyruvate (PEP). It is essential for the degradation of carbohydrates via glycolysis. The polypeptide is Enolase (Haemophilus influenzae (strain ATCC 51907 / DSM 11121 / KW20 / Rd)).